Reading from the N-terminus, the 223-residue chain is NADH-quinone oxidoreductase subunit C (223 aa).

This sequence belongs to the complex I 30 kDa subunit family. As to quaternary structure, NDH-1 is composed of 14 different subunits. Subunits NuoB, C, D, E, F, and G constitute the peripheral sector of the complex.

It is found in the cell inner membrane. It carries out the reaction a quinone + NADH + 5 H(+)(in) = a quinol + NAD(+) + 4 H(+)(out). In terms of biological role, NDH-1 shuttles electrons from NADH, via FMN and iron-sulfur (Fe-S) centers, to quinones in the respiratory chain. The immediate electron acceptor for the enzyme in this species is believed to be ubiquinone. Couples the redox reaction to proton translocation (for every two electrons transferred, four hydrogen ions are translocated across the cytoplasmic membrane), and thus conserves the redox energy in a proton gradient. The protein is NADH-quinone oxidoreductase subunit C of Hydrogenovibrio crunogenus (strain DSM 25203 / XCL-2) (Thiomicrospira crunogena).